The following is a 455-amino-acid chain: Serine--tRNA ligase (455 aa).

Position 252-254 (252-254 (TAE)) interacts with L-serine. ATP contacts are provided by residues 283-285 (RKE) and Val-299. Residue Glu-306 participates in L-serine binding. An ATP-binding site is contributed by 370–373 (EVVS). Thr-406 lines the L-serine pocket.

The protein belongs to the class-II aminoacyl-tRNA synthetase family. Type-1 seryl-tRNA synthetase subfamily. Homodimer. The tRNA molecule binds across the dimer.

Its subcellular location is the cytoplasm. It catalyses the reaction tRNA(Ser) + L-serine + ATP = L-seryl-tRNA(Ser) + AMP + diphosphate + H(+). It carries out the reaction tRNA(Sec) + L-serine + ATP = L-seryl-tRNA(Sec) + AMP + diphosphate + H(+). It functions in the pathway aminoacyl-tRNA biosynthesis; selenocysteinyl-tRNA(Sec) biosynthesis; L-seryl-tRNA(Sec) from L-serine and tRNA(Sec): step 1/1. Its function is as follows. Catalyzes the attachment of serine to tRNA(Ser). Is also able to aminoacylate tRNA(Sec) with serine, to form the misacylated tRNA L-seryl-tRNA(Sec), which will be further converted into selenocysteinyl-tRNA(Sec). The protein is Serine--tRNA ligase of Thermococcus kodakarensis (strain ATCC BAA-918 / JCM 12380 / KOD1) (Pyrococcus kodakaraensis (strain KOD1)).